The primary structure comprises 181 residues: Bradykinin-potentiating and C-type natriuretic peptides (181 aa).

A signal peptide spans 1–23; that stretch reads MFVSRLAASGLLLLALLAVSLDG. A propeptide spanning residues 24-30 is cleaved from the precursor; it reads KPLQQWS. A Pyrrolidone carboxylic acid modification is found at Q31. A propeptide spanning residues 41–43 is cleaved from the precursor; the sequence is LVV. Residue Q44 is modified to Pyrrolidone carboxylic acid. 2 propeptides span residues 50–78 and 90–157; these read TQLQARESPAGGTTALREELSLGPEAALD and GSKA…KGLA. Positions 74–153 are disordered; that stretch reads EAALDTPPAG…GGGGGGARRL (80 aa). Low complexity predominate over residues 104–114; the sequence is SKGASATSAAS. Residues 140–150 show a composition bias toward gly residues; the sequence is AGGGGGGGGGA. The cysteines at positions 165 and 181 are disulfide-linked.

In the N-terminal section; belongs to the bradykinin-potentiating peptide family. It in the C-terminal section; belongs to the natriuretic peptide family. Venom gland.

It is found in the secreted. Its function is as follows. Bradykinin-potentiating peptide both inhibits the activity of the angiotensin-converting enzyme (ACE) and enhances the action of bradykinin by inhibiting the peptidases that inactivate it. It acts as an indirect hypotensive agent. In terms of biological role, antagonizes the vasodilatory actions of bradykinin at the B2 bradykinin receptor. Has no demonstrable hypotensive activity when injected intravenously in rats. Functionally, has a vasorelaxant activity in rat aortic strips and a diuretic potency in anesthetized rats. May act by activating natriuretic receptors (NPR1 and/or NPR2). The chain is Bradykinin-potentiating and C-type natriuretic peptides from Crotalus durissus collilineatus (Brazilian rattlesnake).